We begin with the raw amino-acid sequence, 100 residues long: Large ribosomal subunit protein uL23 (100 aa).

Belongs to the universal ribosomal protein uL23 family. As to quaternary structure, part of the 50S ribosomal subunit. Contacts protein L29, and trigger factor when it is bound to the ribosome.

In terms of biological role, one of the early assembly proteins it binds 23S rRNA. One of the proteins that surrounds the polypeptide exit tunnel on the outside of the ribosome. Forms the main docking site for trigger factor binding to the ribosome. This is Large ribosomal subunit protein uL23 from Sodalis glossinidius (strain morsitans).